The following is a 144-amino-acid chain: MEQALKQAGIAFDKNEVPVGAVIVDRLNQKIIVSSHNNTEEKNNALYHAEIIAINEACNLISSKNLNDYDIYVTLEPCAMCAAAIAHSRLKRLFYGASDSKHGAVESNLRYFNSSVCFYRPEIYSGILAEDSRLLMKEFFKRIR.

One can recognise a CMP/dCMP-type deaminase domain in the interval 1-116 (MEQALKQAGI…SNLRYFNSSV (116 aa)). Histidine 48 is a Zn(2+) binding site. Glutamate 50 functions as the Proton donor in the catalytic mechanism. Positions 78 and 81 each coordinate Zn(2+).

Belongs to the cytidine and deoxycytidylate deaminase family. In terms of assembly, homodimer. Requires Zn(2+) as cofactor.

The enzyme catalyses adenosine(34) in tRNA + H2O + H(+) = inosine(34) in tRNA + NH4(+). Functionally, catalyzes the deamination of adenosine to inosine at the wobble position 34 of tRNA(Arg2). The chain is tRNA-specific adenosine deaminase from Rickettsia felis (strain ATCC VR-1525 / URRWXCal2) (Rickettsia azadi).